A 91-amino-acid polypeptide reads, in one-letter code: Mercuric transport protein periplasmic component (91 aa).

The N-terminal stretch at 1–19 is a signal peptide; it reads MKKLFASLALAAVVAPVWA. Residues 22-88 enclose the HMA domain; that stretch reads QTVTLSVPGM…ATADAGYPSS (67 aa). The Hg(2+) site is built by Cys33 and Cys36.

Belongs to the MerP family. Monomer.

It localises to the periplasm. Its function is as follows. Involved in mercury resistance. Acts as a mercury scavenger that specifically binds to a mercuric ion in the periplasm and probably passes it to the cytoplasmic mercuric reductase MerA via the mercuric transport protein MerT. This Pseudomonas aeruginosa protein is Mercuric transport protein periplasmic component.